A 238-amino-acid polypeptide reads, in one-letter code: 2-C-methyl-D-erythritol 4-phosphate cytidylyltransferase (238 aa).

The protein belongs to the IspD/TarI cytidylyltransferase family. IspD subfamily.

The enzyme catalyses 2-C-methyl-D-erythritol 4-phosphate + CTP + H(+) = 4-CDP-2-C-methyl-D-erythritol + diphosphate. It functions in the pathway isoprenoid biosynthesis; isopentenyl diphosphate biosynthesis via DXP pathway; isopentenyl diphosphate from 1-deoxy-D-xylulose 5-phosphate: step 2/6. Catalyzes the formation of 4-diphosphocytidyl-2-C-methyl-D-erythritol from CTP and 2-C-methyl-D-erythritol 4-phosphate (MEP). In Acinetobacter baumannii (strain AYE), this protein is 2-C-methyl-D-erythritol 4-phosphate cytidylyltransferase.